The following is a 372-amino-acid chain: Cytochrome b (372 aa).

4 helical membrane passes run 25–45, 69–90, 105–125, and 170–190; these read FGSM…FLSM, WMMQ…YIHV, WLSG…GYVL, and FFAL…LHIM. His-75 and His-89 together coordinate heme b. Heme b-binding residues include His-174 and His-188. His-193 serves as a coordination point for a ubiquinone. Transmembrane regions (helical) follow at residues 218-238, 280-300, 312-332, and 339-358; these read YKDL…ISFI, LGGA…PFTH, FMQL…WTAT, and YTMI…MSNP.

It belongs to the cytochrome b family. As to quaternary structure, the cytochrome bc1 complex contains 3 respiratory subunits (MT-CYB, CYC1 and UQCRFS1), 2 core proteins (UQCRC1 and UQCRC2) and probably 6 low-molecular weight proteins. It depends on heme b as a cofactor.

The protein resides in the mitochondrion inner membrane. Its function is as follows. Component of the ubiquinol-cytochrome c reductase complex (complex III or cytochrome b-c1 complex) that is part of the mitochondrial respiratory chain. The b-c1 complex mediates electron transfer from ubiquinol to cytochrome c. Contributes to the generation of a proton gradient across the mitochondrial membrane that is then used for ATP synthesis. In Acrantophis dumerili (Dumeril's ground boa), this protein is Cytochrome b (MT-CYB).